The chain runs to 274 residues: 2,3,4,5-tetrahydropyridine-2,6-dicarboxylate N-succinyltransferase (274 aa).

2 residues coordinate substrate: arginine 104 and aspartate 141.

Belongs to the transferase hexapeptide repeat family. Homotrimer.

Its subcellular location is the cytoplasm. The catalysed reaction is (S)-2,3,4,5-tetrahydrodipicolinate + succinyl-CoA + H2O = (S)-2-succinylamino-6-oxoheptanedioate + CoA. It participates in amino-acid biosynthesis; L-lysine biosynthesis via DAP pathway; LL-2,6-diaminopimelate from (S)-tetrahydrodipicolinate (succinylase route): step 1/3. The chain is 2,3,4,5-tetrahydropyridine-2,6-dicarboxylate N-succinyltransferase from Shewanella halifaxensis (strain HAW-EB4).